A 160-amino-acid chain; its full sequence is Variant surface antigen C (160 aa).

The signal sequence occupies residues 1–29; the sequence is MKKSIFSKKLLVSFGSLVALASIPLIAIS. Cysteine 30 is lipidated: N-palmitoyl cysteine. Residue cysteine 30 is the site of S-diacylglycerol cysteine attachment. Positions 32–160 are disordered; the sequence is QTNTDKSQQP…SSESGSQKTT (129 aa). 2 stretches are compositionally biased toward low complexity: residues 38–54 and 62–87; these read SQQP…QSGT and SGTS…QTET. Tandem repeats lie at residues 86 to 97, 98 to 109, 110 to 121, 122 to 133, 134 to 145, and 146 to 157. Residues 86–157 are 6 X 12 AA tandem repeats; the sequence is ETAPKSPESG…APKSSESGSQ (72 aa). Residues 93–160 show a composition bias toward polar residues; sequence ESGSQEATPK…SSESGSQKTT (68 aa).

The protein localises to the cell membrane. Its function is as follows. Responsible for the antigenic diversity for host adaptation. The sequence is that of Variant surface antigen C (vlpC) from Mesomycoplasma hyorhinis (Mycoplasma hyorhinis).